Consider the following 418-residue polypeptide: Pestheic acid cluster transcriptional regulator 1 (418 aa).

A disordered region spans residues 244 to 272 (GTAVTTTATTSSSFISKSSEEPSPKRIKP). The segment covering 245–260 (TAVTTTATTSSSFISK) has biased composition (low complexity).

The protein resides in the nucleus. Functionally, transcription factor that, with ptaR2 and ptaR3, coregulates the expression of the gene cluster that mediates the biosynthesis of pestheic acid, a diphenyl ether which is a biosynthetic precursor of the unique chloropupukeananes. The sequence is that of Pestheic acid cluster transcriptional regulator 1 from Pestalotiopsis fici (strain W106-1 / CGMCC3.15140).